The primary structure comprises 833 residues: Disintegrin and metalloproteinase domain-containing protein 17 (833 aa).

Residues 1-17 (MRQCALFLTSLVPIVLA) form the signal peptide. Positions 223 to 474 (NTCKLLVVAD…KAQECFQERS (252 aa)) constitute a Peptidase M12B domain. Residues 301–345 (AKSYPNEEKDAWDVKMLLEQFSFDIAEEASKVCLAHLFTYQDFDM) form an interaction with classical swine fever virus envelope glycoprotein E2 region. 3 disulfide bridges follow: C365-C469, C423-C453, and C534-C555. H405 is a binding site for Zn(2+). E406 is an active-site residue. Zn(2+) contacts are provided by H409 and H415. Residues 475–563 (NKVCGNSRVD…ECPPPGNAED (89 aa)) form the Disintegrin domain. A helical membrane pass occupies residues 672–692 (IVGSVLVFSLMLWIPVSILVH). Disordered stretches follow at residues 735-760 (TPGR…VPVA) and 772-833 (QEDP…ETEC). Basic and acidic residues-rich tracts occupy residues 777-790 (TDSH…EKDP), 800-816 (SFED…EKAS), and 824-833 (SRVDSKETEC).

(Microbial infection) Interacts (via metalloproteinase domain) with classical swine fever virus envelope glycoprotein E2; this interaction allows binding and probably entry of the virus into the cell. As to quaternary structure, interacts with MAD2L1, MAPK14 and MUC1. Interacts with iRhom1/RHBDF1 and iRhom2/RHBDF2. Interacts with FRMD8 via its interaction with iRhom1/RHBDF1 and iRhom2/RHBDF2. The cofactor is Zn(2+). Post-translationally, the precursor is cleaved by a furin endopeptidase. In terms of processing, phosphorylated.

The protein resides in the membrane. The catalysed reaction is Narrow endopeptidase specificity. Cleaves Pro-Leu-Ala-Gln-Ala-|-Val-Arg-Ser-Ser-Ser in the membrane-bound, 26-kDa form of tumor necrosis factor alpha (TNFalpha). Similarly cleaves other membrane-anchored, cell-surface proteins to 'shed' the extracellular domains.. Its function is as follows. Transmembrane metalloprotease which mediates the ectodomain shedding of a myriad of transmembrane proteins including adhesion proteins, growth factor precursors and cytokines important for inflammation and immunity. Cleaves the membrane-bound precursor of TNF-alpha to its mature soluble form. Responsible for the proteolytical release of soluble JAM3 from endothelial cells surface. Responsible for the proteolytic release of several other cell-surface proteins, including p75 TNF-receptor, interleukin 1 receptor type II, p55 TNF-receptor, transforming growth factor-alpha, L-selectin, growth hormone receptor, MUC1 and the amyloid precursor protein. Acts as an activator of Notch pathway by mediating cleavage of Notch, generating the membrane-associated intermediate fragment called Notch extracellular truncation (NEXT). Plays a role in the proteolytic processing of ACE2. Plays a role in hemostasis through shedding of GP1BA, the platelet glycoprotein Ib alpha chain. Mediates the proteolytic cleavage of LAG3, leading to release the secreted form of LAG3. Mediates the proteolytic cleavage of IL6R, leading to the release of secreted form of IL6R. Mediates the proteolytic cleavage and shedding of FCGR3A upon NK cell stimulation, a mechanism that allows for increased NK cell motility and detachment from opsonized target cells. Cleaves TREM2, resulting in shedding of the TREM2 ectodomain. In terms of biological role, (Microbial infection) Acts as a receptor for classical swine fever virus. The polypeptide is Disintegrin and metalloproteinase domain-containing protein 17 (ADAM17) (Sus scrofa (Pig)).